The sequence spans 95 residues: Acyl carrier protein AcpXL (95 aa).

The Carrier domain occupies 4–90 (TATFDKVADI…NLCAKIDELR (87 aa)). Serine 39 carries the post-translational modification O-(pantetheine 4'-phosphoryl)serine.

In terms of processing, 4'-phosphopantetheine is transferred from CoA to a specific serine of apo-ACP by AcpS. This modification is essential for activity because fatty acids are bound in thioester linkage to the sulfhydryl of the prosthetic group.

Its subcellular location is the cytoplasm. It participates in glycolipid biosynthesis; KDO(2)-lipid A biosynthesis. In terms of biological role, carrier of the growing fatty acid chain in fatty acid biosynthesis. Is involved in the transfer of long hydroxylated fatty acids to lipid A. This Rhizobium meliloti (strain 1021) (Ensifer meliloti) protein is Acyl carrier protein AcpXL (acpXL).